The chain runs to 358 residues: Flap endonuclease 1 (358 aa).

Residues 1–103 form an N-domain region; sequence MGIKRLSKLI…HEFEKRTKRR (103 aa). Aspartate 34 contributes to the Mg(2+) binding site. DNA-binding residues include arginine 47 and arginine 69. Mg(2+) is bound by residues aspartate 85, glutamate 157, glutamate 159, aspartate 178, and aspartate 180. An I-domain region spans residues 121-252; the sequence is LVSKYDRMNV…KRAFEYIKKY (132 aa). Residue glutamate 157 participates in DNA binding. Glycine 230 and aspartate 232 together coordinate DNA. Aspartate 232 serves as a coordination point for Mg(2+). The segment at 346–354 is interaction with PCNA; sequence KQTRIDSFF.

The protein belongs to the XPG/RAD2 endonuclease family. FEN1 subfamily. As to quaternary structure, interacts with PCNA. Three molecules of FEN1 bind to one PCNA trimer with each molecule binding to one PCNA monomer. PCNA stimulates the nuclease activity without altering cleavage specificity. Mg(2+) serves as cofactor. In terms of processing, phosphorylated. Phosphorylation upon DNA damage induces relocalization to the nuclear plasma.

The protein localises to the nucleus. It localises to the nucleolus. The protein resides in the nucleoplasm. Its subcellular location is the mitochondrion. Functionally, structure-specific nuclease with 5'-flap endonuclease and 5'-3' exonuclease activities involved in DNA replication and repair. During DNA replication, cleaves the 5'-overhanging flap structure that is generated by displacement synthesis when DNA polymerase encounters the 5'-end of a downstream Okazaki fragment. It enters the flap from the 5'-end and then tracks to cleave the flap base, leaving a nick for ligation. Also involved in the long patch base excision repair (LP-BER) pathway, by cleaving within the apurinic/apyrimidinic (AP) site-terminated flap. Acts as a genome stabilization factor that prevents flaps from equilibrating into structures that lead to duplications and deletions. Also possesses 5'-3' exonuclease activity on nicked or gapped double-stranded DNA, and exhibits RNase H activity. Also involved in replication and repair of rDNA and in repairing mitochondrial DNA. The polypeptide is Flap endonuclease 1 (Enterocytozoon bieneusi (strain H348) (Microsporidian parasite)).